The sequence spans 180 residues: p-cumate 2,3-dioxygenase system, small oxygenase component (180 aa).

Belongs to the bacterial ring-hydroxylating dioxygenase beta subunit family. The p-cumate 2,3-dioxygenase multicomponent enzyme system is composed of an electron transfer component and a dioxygenase component (iron sulfur protein (ISP)). The electron transfer component is composed of a ferredoxin reductase (CmtAa) and a ferredoxin (CmtAd), and the dioxygenase component is formed of a large alpha subunit (CmtAb) and a small beta subunit (CmtAc).

It functions in the pathway aromatic compound metabolism; p-cumate degradation; acetaldehyde and pyruvate from p-cumate. Its function is as follows. Component of the p-cumate 2,3-dioxygenase multicomponent enzyme system which catalyzes the incorporation of both atoms of molecular oxygen into p-cumate to form cis-2,3-dihydroxy-2,3-dihydro-p-cumate. The beta subunit seems to have a structural role in the holoenzyme. Also able to catalyze the cis-dihydroxylation of indole-2-carboxylate and indole-3-carboxylate. The polypeptide is p-cumate 2,3-dioxygenase system, small oxygenase component (Pseudomonas putida (Arthrobacter siderocapsulatus)).